We begin with the raw amino-acid sequence, 64 residues long: Large ribosomal subunit protein bL35 (64 aa).

Positions 1 to 26 (MPKMKSHRGASKRFKRTASGKLKRGR) are enriched in basic residues. Disordered stretches follow at residues 1–28 (MPKM…GRAY) and 33–52 (FGNK…MVSS).

The protein belongs to the bacterial ribosomal protein bL35 family.

The chain is Large ribosomal subunit protein bL35 from Exiguobacterium sibiricum (strain DSM 17290 / CCUG 55495 / CIP 109462 / JCM 13490 / 255-15).